A 91-amino-acid chain; its full sequence is LSCGDVATQMASCINYLRGAGPLPAACCNGVKNLKNSATTTQDRRTACKCLISASKTISGVNFGLAAGLPAKCGVSIPYKISPSTNCDQVN.

4 disulfides stabilise this stretch: Cys-3–Cys-50, Cys-13–Cys-27, Cys-28–Cys-73, and Cys-48–Cys-87.

It localises to the secreted. Functionally, plant non-specific lipid-transfer proteins transfer phospholipids as well as galactolipids across membranes. May play a role in wax or cutin deposition in the cell walls of expanding epidermal cells and certain secretory tissues. The polypeptide is Non-specific lipid-transfer protein P3 (Vitis sp. (Grape)).